Consider the following 571-residue polypeptide: Proline--tRNA ligase (571 aa).

The protein belongs to the class-II aminoacyl-tRNA synthetase family. ProS type 1 subfamily. In terms of assembly, homodimer.

Its subcellular location is the cytoplasm. It catalyses the reaction tRNA(Pro) + L-proline + ATP = L-prolyl-tRNA(Pro) + AMP + diphosphate. Functionally, catalyzes the attachment of proline to tRNA(Pro) in a two-step reaction: proline is first activated by ATP to form Pro-AMP and then transferred to the acceptor end of tRNA(Pro). As ProRS can inadvertently accommodate and process non-cognate amino acids such as alanine and cysteine, to avoid such errors it has two additional distinct editing activities against alanine. One activity is designated as 'pretransfer' editing and involves the tRNA(Pro)-independent hydrolysis of activated Ala-AMP. The other activity is designated 'posttransfer' editing and involves deacylation of mischarged Ala-tRNA(Pro). The misacylated Cys-tRNA(Pro) is not edited by ProRS. The polypeptide is Proline--tRNA ligase (Pseudomonas syringae pv. syringae (strain B728a)).